We begin with the raw amino-acid sequence, 476 residues long: MCVKLAGNLFKTSDFIQCRKVILAVSGGSDSLALLFLVKDHLKTFSIPTEIIVVTVDHQLRRESACEAESVAEICRAHHIQHVIVRWEGKKPKTHIISSARTVRYNLLFKEAQKQGATLIMTGHTLNDQVETYQMRCQRLQKSADVLQREAFEDMRDGVCSTETRANIAEKSYGLMYERGLSCIPREALLNQTVRLIRPLLGVKRKTLRAYLRLKGKTWIDDPTNENPNFERVRVRQSLHPKKFAGIAQKVHEATLQRRKQAQNVANLILALDVSVEHGRCFIAKPVSFLQQHSGFPFVVGLFAVLMGGGFYLLPTKKLNTLVSKLCLHSLEKRRFTLAGSVIESNRSGLAFWRESRNIKEGAVEPGKTFLWDGRYQITNRGDETIKVGAAGLQQLKSLFKNNNFDLENAHFPSLQSLLMISNDKGYDIPELTNHTTSQQSIIIKRIMAPFDWLLSCEDVPFVNVLEPFFDIKVER.

26–31 (SGGSDS) lines the ATP pocket.

This sequence belongs to the tRNA(Ile)-lysidine synthase family.

It localises to the cytoplasm. The enzyme catalyses cytidine(34) in tRNA(Ile2) + L-lysine + ATP = lysidine(34) in tRNA(Ile2) + AMP + diphosphate + H(+). Its function is as follows. Ligates lysine onto the cytidine present at position 34 of the AUA codon-specific tRNA(Ile) that contains the anticodon CAU, in an ATP-dependent manner. Cytidine is converted to lysidine, thus changing the amino acid specificity of the tRNA from methionine to isoleucine. This Bartonella quintana (strain Toulouse) (Rochalimaea quintana) protein is tRNA(Ile)-lysidine synthase.